The sequence spans 280 residues: Lacto-N-neotetraose biosynthesis glycosyltransferase LgtE (280 aa).

Belongs to the glycosyltransferase 25 family.

The protein operates within glycan metabolism; lacto-N-neotetraose biosynthesis. It functions in the pathway bacterial outer membrane biogenesis; lipooligosaccharide biosynthesis. Adds the first galactose to the lacto-N-tetraose chain in lipooligosaccharide (LOS). The protein is Lacto-N-neotetraose biosynthesis glycosyltransferase LgtE (lgtE) of Neisseria meningitidis serogroup B (strain ATCC BAA-335 / MC58).